Reading from the N-terminus, the 464-residue chain is Macrophage metalloelastase (464 aa).

The first 17 residues, 1-17, serve as a signal peptide directing secretion; sequence MKFLLLILTLWVTSSGA. A propeptide spans 18-100 (activation peptide); sequence DPLKENDMLF…DVYHFKTMPG (83 aa). The N-linked (GlcNAc...) asparagine glycan is linked to Asn-69. Residues 85–92 carry the Cysteine switch motif; sequence PRCGVPDV. Cys-87 lines the Zn(2+) pocket. Ca(2+) is bound by residues Asp-119 and Asp-153. Residues His-163 and Asp-165 each contribute to the Zn(2+) site. Residues Asp-170, Gly-171, Gly-173, and Val-175 each coordinate Ca(2+). Residue His-178 participates in Zn(2+) binding. Gly-185, Gly-187, and Asp-189 together coordinate Ca(2+). Residue His-191 participates in Zn(2+) binding. The Ca(2+) site is built by Asp-193, Glu-194, and Glu-196. Residue His-213 coordinates Zn(2+). Residue Glu-214 is part of the active site. Zn(2+) is bound by residues His-217 and His-223. Hemopexin repeat units follow at residues 274–323, 324–370, 372–420, and 421–464; these read PTAC…WPTL, PSGI…GFPD, VKKI…FPGI, and GPKI…WFDC. Residues Cys-277 and Cys-464 are joined by a disulfide bond. 4 residues coordinate Ca(2+): Asp-284, Glu-328, Asp-376, and Asp-425.

It belongs to the peptidase M10A family. Requires Ca(2+) as cofactor. Zn(2+) serves as cofactor.

The protein localises to the secreted. It is found in the extracellular space. The protein resides in the extracellular matrix. The catalysed reaction is Hydrolysis of soluble and insoluble elastin. Specific cleavages are also produced at 14-Ala-|-Leu-15 and 16-Tyr-|-Leu-17 in the B chain of insulin.. In terms of biological role, may be involved in tissue injury and remodeling. Has significant elastolytic activity. Can accept large and small amino acids at the P1' site, but has a preference for leucine. Aromatic or hydrophobic residues are preferred at the P1 site, with small hydrophobic residues (preferably alanine) occupying P3. The chain is Macrophage metalloelastase (MMP12) from Oryctolagus cuniculus (Rabbit).